Here is a 230-residue protein sequence, read N- to C-terminus: Cytochrome c oxidase subunit 2 (230 aa).

At 1–14 (MAHPSQLGFQDAAS) the chain is on the mitochondrial intermembrane side. A helical transmembrane segment spans residues 15–45 (PVMEELLHFHDHALMIVLLISTLVLYIIVAM). Over 46–59 (VSTKLTNMYILDSQ) the chain is Mitochondrial matrix. Residues 60–87 (EIEIVWTVLPAVILILIALPSLRILYLM) traverse the membrane as a helical segment. Topologically, residues 88 to 230 (DEINDPHLTI…KWSTMMLEDA (143 aa)) are mitochondrial intermembrane. Residues H161, C196, E198, C200, H204, and M207 each coordinate Cu cation. E198 is a binding site for Mg(2+).

Belongs to the cytochrome c oxidase subunit 2 family. In terms of assembly, component of the cytochrome c oxidase (complex IV, CIV), a multisubunit enzyme composed of 14 subunits. The complex is composed of a catalytic core of 3 subunits MT-CO1, MT-CO2 and MT-CO3, encoded in the mitochondrial DNA, and 11 supernumerary subunits COX4I, COX5A, COX5B, COX6A, COX6B, COX6C, COX7A, COX7B, COX7C, COX8 and NDUFA4, which are encoded in the nuclear genome. The complex exists as a monomer or a dimer and forms supercomplexes (SCs) in the inner mitochondrial membrane with NADH-ubiquinone oxidoreductase (complex I, CI) and ubiquinol-cytochrome c oxidoreductase (cytochrome b-c1 complex, complex III, CIII), resulting in different assemblies (supercomplex SCI(1)III(2)IV(1) and megacomplex MCI(2)III(2)IV(2)). Found in a complex with TMEM177, COA6, COX18, COX20, SCO1 and SCO2. Interacts with TMEM177 in a COX20-dependent manner. Interacts with COX20. Interacts with COX16. Cu cation serves as cofactor.

The protein localises to the mitochondrion inner membrane. It catalyses the reaction 4 Fe(II)-[cytochrome c] + O2 + 8 H(+)(in) = 4 Fe(III)-[cytochrome c] + 2 H2O + 4 H(+)(out). Component of the cytochrome c oxidase, the last enzyme in the mitochondrial electron transport chain which drives oxidative phosphorylation. The respiratory chain contains 3 multisubunit complexes succinate dehydrogenase (complex II, CII), ubiquinol-cytochrome c oxidoreductase (cytochrome b-c1 complex, complex III, CIII) and cytochrome c oxidase (complex IV, CIV), that cooperate to transfer electrons derived from NADH and succinate to molecular oxygen, creating an electrochemical gradient over the inner membrane that drives transmembrane transport and the ATP synthase. Cytochrome c oxidase is the component of the respiratory chain that catalyzes the reduction of oxygen to water. Electrons originating from reduced cytochrome c in the intermembrane space (IMS) are transferred via the dinuclear copper A center (CU(A)) of subunit 2 and heme A of subunit 1 to the active site in subunit 1, a binuclear center (BNC) formed by heme A3 and copper B (CU(B)). The BNC reduces molecular oxygen to 2 water molecules using 4 electrons from cytochrome c in the IMS and 4 protons from the mitochondrial matrix. The polypeptide is Cytochrome c oxidase subunit 2 (mt-co2) (Oncorhynchus mykiss (Rainbow trout)).